The sequence spans 222 residues: Thiol:disulfide interchange protein DsbL (222 aa).

The first 27 residues, Met1–Ala27, serve as a signal peptide directing secretion. The Thioredoxin domain occupies Phe28–Ser221. Cys56 and Cys59 are disulfide-bonded.

Belongs to the thioredoxin family. DsbL subfamily. As to quaternary structure, interacts with DsbI.

The protein resides in the periplasm. Functionally, involved in disulfide-bond formation. Acts by transferring its disulfide bond to other proteins. Part of a redox system composed of DsbI and DsbL that mediates formation of an essential disulfide bond in AssT. This chain is Thiol:disulfide interchange protein DsbL, found in Escherichia coli O6:H1 (strain CFT073 / ATCC 700928 / UPEC).